Consider the following 304-residue polypeptide: Acetyl-coenzyme A carboxylase carboxyl transferase subunit beta (304 aa).

The 270-residue stretch at 26–295 (VWTKCTSCEQ…PFVEPELVEN (270 aa)) folds into the CoA carboxyltransferase N-terminal domain. Residues C30, C33, C49, and C52 each contribute to the Zn(2+) site. The C4-type zinc-finger motif lies at 30 to 52 (CTSCEQVLYRDELRRHLEVCPKC). The tract at residues 281 to 304 (SNKPSPFVEPELVENEEQSKSDNE) is disordered.

Belongs to the AccD/PCCB family. As to quaternary structure, acetyl-CoA carboxylase is a heterohexamer composed of biotin carboxyl carrier protein (AccB), biotin carboxylase (AccC) and two subunits each of ACCase subunit alpha (AccA) and ACCase subunit beta (AccD). Zn(2+) is required as a cofactor.

It localises to the cytoplasm. It carries out the reaction N(6)-carboxybiotinyl-L-lysyl-[protein] + acetyl-CoA = N(6)-biotinyl-L-lysyl-[protein] + malonyl-CoA. Its pathway is lipid metabolism; malonyl-CoA biosynthesis; malonyl-CoA from acetyl-CoA: step 1/1. Component of the acetyl coenzyme A carboxylase (ACC) complex. Biotin carboxylase (BC) catalyzes the carboxylation of biotin on its carrier protein (BCCP) and then the CO(2) group is transferred by the transcarboxylase to acetyl-CoA to form malonyl-CoA. In Pasteurella multocida (strain Pm70), this protein is Acetyl-coenzyme A carboxylase carboxyl transferase subunit beta.